The primary structure comprises 125 residues: Ribosome-binding factor A (125 aa).

The protein belongs to the RbfA family. Monomer. Binds 30S ribosomal subunits, but not 50S ribosomal subunits or 70S ribosomes.

Its subcellular location is the cytoplasm. In terms of biological role, one of several proteins that assist in the late maturation steps of the functional core of the 30S ribosomal subunit. Associates with free 30S ribosomal subunits (but not with 30S subunits that are part of 70S ribosomes or polysomes). Required for efficient processing of 16S rRNA. May interact with the 5'-terminal helix region of 16S rRNA. This Carboxydothermus hydrogenoformans (strain ATCC BAA-161 / DSM 6008 / Z-2901) protein is Ribosome-binding factor A.